Here is a 215-residue protein sequence, read N- to C-terminus: MNSYIKEKMENNGYKIILIGSSGVGKSSIVHQFLFNRKISNVSPTIGAAFASKQVIAKNGKTLKLNIWDTAGQERFRSITKMYYTNSLGCLVVFDVTDRESFDDVYYWINDLRINCHTTYYILVVANKIDIDKNNWRVSENEIKKFCRDNDCDYVFASSFESDTVNNLFGKMIDKMSEIKINPDSRRNDIIYLSDKSSGIDDFIDKISQNCCYIS.

20 to 27 (GSSGVGKS) provides a ligand contact to GTP. An Effector region motif is present at residues 42-50 (VSPTIGAAF). GTP is bound by residues 69–73 (DTAGQ) and 127–130 (NKID). 2 S-geranylgeranyl cysteine; by host lipidation sites follow: cysteine 211 and cysteine 212. Cysteine methyl ester; by host is present on cysteine 212. Residues 213-215 (YIS) constitute a propeptide, removed in mature form.

This sequence belongs to the small GTPase superfamily. Rab family.

The protein resides in the host cell membrane. Functionally, may be involved in protein transport. This is Probable Rab-related GTPase from Acanthamoeba polyphaga mimivirus (APMV).